A 517-amino-acid polypeptide reads, in one-letter code: Crotonobetaine/carnitine--CoA ligase (517 aa).

It belongs to the ATP-dependent AMP-binding enzyme family.

The enzyme catalyses 4-(trimethylamino)butanoate + ATP + CoA = 4-(trimethylamino)butanoyl-CoA + AMP + diphosphate. It catalyses the reaction crotonobetaine + ATP + CoA = crotonobetainyl-CoA + AMP + diphosphate. It carries out the reaction (R)-carnitine + ATP + CoA = (R)-carnitinyl-CoA + AMP + diphosphate. It functions in the pathway amine and polyamine metabolism; carnitine metabolism. Its function is as follows. Catalyzes the transfer of CoA to carnitine, generating the initial carnitinyl-CoA needed for the CaiB reaction cycle. Also has activity toward crotonobetaine and gamma-butyrobetaine. This Shigella flexneri protein is Crotonobetaine/carnitine--CoA ligase.